The chain runs to 159 residues: 2-C-methyl-D-erythritol 2,4-cyclodiphosphate synthase (159 aa).

Asp10 and His12 together coordinate a divalent metal cation. 4-CDP-2-C-methyl-D-erythritol 2-phosphate contacts are provided by residues 10 to 12 and 36 to 37; these read DVH and HS. Residue His44 coordinates a divalent metal cation. 4-CDP-2-C-methyl-D-erythritol 2-phosphate-binding positions include 58–60, 63–67, 102–108, 134–137, Phe141, and Arg144; these read DIG, FPDTD, AQAPRMA, and TTSE.

It belongs to the IspF family. In terms of assembly, homotrimer. A divalent metal cation is required as a cofactor.

It catalyses the reaction 4-CDP-2-C-methyl-D-erythritol 2-phosphate = 2-C-methyl-D-erythritol 2,4-cyclic diphosphate + CMP. Its pathway is isoprenoid biosynthesis; isopentenyl diphosphate biosynthesis via DXP pathway; isopentenyl diphosphate from 1-deoxy-D-xylulose 5-phosphate: step 4/6. Its function is as follows. Involved in the biosynthesis of isopentenyl diphosphate (IPP) and dimethylallyl diphosphate (DMAPP), two major building blocks of isoprenoid compounds. Catalyzes the conversion of 4-diphosphocytidyl-2-C-methyl-D-erythritol 2-phosphate (CDP-ME2P) to 2-C-methyl-D-erythritol 2,4-cyclodiphosphate (ME-CPP) with a corresponding release of cytidine 5-monophosphate (CMP). This Cellvibrio japonicus (strain Ueda107) (Pseudomonas fluorescens subsp. cellulosa) protein is 2-C-methyl-D-erythritol 2,4-cyclodiphosphate synthase.